Consider the following 531-residue polypeptide: Probable inactive beta-glucosidase 25 (531 aa).

The first 24 residues, 1 to 24 (MALKAILFLGLFLVVIVSPITVYG), serve as a signal peptide directing secretion. A beta-D-glucoside-binding positions include Gln53 and 202–203 (NE). Residue Glu203 is the Proton donor of the active site. A disulfide bridge links Cys222 with Cys230. A beta-D-glucoside-binding positions include Phe348 and 477–478 (EW).

The protein belongs to the glycosyl hydrolase 1 family.

This is Probable inactive beta-glucosidase 25 from Arabidopsis thaliana (Mouse-ear cress).